We begin with the raw amino-acid sequence, 652 residues long: DNA ligase (652 aa).

Residues 29–33 (DAEYD), 78–79 (SL), and Glu-107 each bind NAD(+). Lys-109 serves as the catalytic N6-AMP-lysine intermediate. 4 residues coordinate NAD(+): Arg-130, Glu-164, Lys-278, and Lys-302. Zn(2+) contacts are provided by Cys-395, Cys-398, Cys-413, and Cys-418. The BRCT domain maps to 577–652 (DENAALSGMT…IKDEAWLESL (76 aa)).

Belongs to the NAD-dependent DNA ligase family. LigA subfamily. Mg(2+) serves as cofactor. Requires Mn(2+) as cofactor.

It carries out the reaction NAD(+) + (deoxyribonucleotide)n-3'-hydroxyl + 5'-phospho-(deoxyribonucleotide)m = (deoxyribonucleotide)n+m + AMP + beta-nicotinamide D-nucleotide.. Functionally, DNA ligase that catalyzes the formation of phosphodiester linkages between 5'-phosphoryl and 3'-hydroxyl groups in double-stranded DNA using NAD as a coenzyme and as the energy source for the reaction. It is essential for DNA replication and repair of damaged DNA. This is DNA ligase from Streptococcus suis (strain 05ZYH33).